Here is a 249-residue protein sequence, read N- to C-terminus: Ubiquinone/menaquinone biosynthesis C-methyltransferase UbiE (249 aa).

S-adenosyl-L-methionine is bound by residues Thr-72, Asp-93, and 121–122; that span reads DA.

Belongs to the class I-like SAM-binding methyltransferase superfamily. MenG/UbiE family.

It carries out the reaction a 2-demethylmenaquinol + S-adenosyl-L-methionine = a menaquinol + S-adenosyl-L-homocysteine + H(+). The catalysed reaction is a 2-methoxy-6-(all-trans-polyprenyl)benzene-1,4-diol + S-adenosyl-L-methionine = a 5-methoxy-2-methyl-3-(all-trans-polyprenyl)benzene-1,4-diol + S-adenosyl-L-homocysteine + H(+). The protein operates within quinol/quinone metabolism; menaquinone biosynthesis; menaquinol from 1,4-dihydroxy-2-naphthoate: step 2/2. It functions in the pathway cofactor biosynthesis; ubiquinone biosynthesis. Functionally, methyltransferase required for the conversion of demethylmenaquinol (DMKH2) to menaquinol (MKH2) and the conversion of 2-polyprenyl-6-methoxy-1,4-benzoquinol (DDMQH2) to 2-polyprenyl-3-methyl-6-methoxy-1,4-benzoquinol (DMQH2). In Saccharophagus degradans (strain 2-40 / ATCC 43961 / DSM 17024), this protein is Ubiquinone/menaquinone biosynthesis C-methyltransferase UbiE.